A 150-amino-acid polypeptide reads, in one-letter code: UPF0178 protein Bcep1808_1605 (150 aa).

It belongs to the UPF0178 family.

This is UPF0178 protein Bcep1808_1605 from Burkholderia vietnamiensis (strain G4 / LMG 22486) (Burkholderia cepacia (strain R1808)).